The following is a 92-amino-acid chain: Large ribosomal subunit protein eL31 (92 aa).

This sequence belongs to the eukaryotic ribosomal protein eL31 family.

The sequence is that of Large ribosomal subunit protein eL31 from Pyrobaculum arsenaticum (strain DSM 13514 / JCM 11321 / PZ6).